Here is a 144-residue protein sequence, read N- to C-terminus: Large ribosomal subunit protein uL14 (144 aa).

The protein belongs to the universal ribosomal protein uL14 family. In terms of assembly, part of the 50S ribosomal subunit. Forms a cluster with proteins L3 and L24e, part of which may contact the 16S rRNA in 2 intersubunit bridges.

Its function is as follows. Binds to 23S rRNA. Forms part of two intersubunit bridges in the 70S ribosome. The polypeptide is Large ribosomal subunit protein uL14 (Pyrobaculum aerophilum (strain ATCC 51768 / DSM 7523 / JCM 9630 / CIP 104966 / NBRC 100827 / IM2)).